A 217-amino-acid polypeptide reads, in one-letter code: MSYHKLTRDQIAQRVAQDIPEGSYVNLGIGLPTKIASYLPADKDVFLHSENGLLAFGPPPAAGEEDPELINAGKEYVTMLEGGCFFHHGDSFAMMRGGHLDICVLGAFQIAANGDLANWHTGAPDAIPSVGGAMDLAVGAKKVFVTTDHVTKKGEPKIVAELTYPATGQKCVDRIYTDLCIIDVVPEGLKVIEKVEGLSFEELQRLTGATLIDATQG.

The active site involves Glu50.

This sequence belongs to the 3-oxoacid CoA-transferase subunit B family. Heterodimer.

It catalyses the reaction 3-oxoadipate + succinyl-CoA = 3-oxoadipyl-CoA + succinate. It participates in aromatic compound metabolism; beta-ketoadipate pathway; acetyl-CoA and succinyl-CoA from 3-oxoadipate: step 1/2. In Acinetobacter baylyi (strain ATCC 33305 / BD413 / ADP1), this protein is 3-oxoadipate CoA-transferase subunit B (pcaJ).